Reading from the N-terminus, the 693-residue chain is Adhesion G-protein coupled receptor G1 (693 aa).

Positions methionine 1 to glycine 25 are cleaved as a signal peptide. Arginine 26 to arginine 33 serves as a coordination point for heparin. At arginine 26–histidine 401 the chain is on the extracellular side. Cystine bridges form between cysteine 35/cysteine 91 and cysteine 121/cysteine 177. N-linked (GlcNAc...) asparagine glycans are attached at residues asparagine 39, asparagine 148, and asparagine 171. Residue leucine 190 to proline 200 coordinates heparin. In terms of domain architecture, GAIN-B spans aspartate 224–valine 395. Residues asparagine 234, asparagine 303, asparagine 324, and asparagine 341 are each glycosylated (N-linked (GlcNAc...) asparagine). Cystine bridges form between cysteine 346-cysteine 377 and cysteine 366-cysteine 379. The segment at cysteine 346–valine 395 is GPS. The segment at tyrosine 384–alanine 397 is stachel. The chain crosses the membrane as a helical span at residues tyrosine 402 to alanine 424. Residues tyrosine 425 to lysine 437 are Cytoplasmic-facing. The helical transmembrane segment at proline 438–phenylalanine 460 threads the bilayer. Residues leucine 461–proline 465 lie on the Extracellular side of the membrane. A helical membrane pass occupies residues valine 466–leucine 495. Residues cysteine 475 and cysteine 562 are joined by a disulfide bond. Residues glutamate 496–threonine 510 lie on the Cytoplasmic side of the membrane. Residues tyrosine 511–leucine 533 traverse the membrane as a helical segment. Residues valine 534–cysteine 562 lie on the Extracellular side of the membrane. A helical transmembrane segment spans residues tryptophan 563–methionine 588. Residues leucine 589–histidine 602 are Cytoplasmic-facing. Residues threonine 603 to alanine 624 form a helical membrane-spanning segment. Residues leucine 625–phenylalanine 628 lie on the Extracellular side of the membrane. A helical transmembrane segment spans residues serine 629–isoleucine 654. Residues phenylalanine 655 to isoleucine 693 lie on the Cytoplasmic side of the membrane. Residues serine 670–isoleucine 693 form a disordered region. Positions serine 684–isoleucine 693 are enriched in low complexity.

The protein belongs to the G-protein coupled receptor 2 family. LN-TM7 subfamily. Heterodimer of 2 chains generated by proteolytic processing; the large extracellular N-terminal fragment (ADGRG1 NT) and the membrane-bound C-terminal fragment (ADGRG1-CT) predominantly remain associated and non-covalently linked. ADGRG1 NT self-associates in a trans-trans manner; the homophilic interaction enhances receptor signaling. Interacts with TGM2. Interacts with heparin; leading to the reduction of ADGRG1 shedding. Interacts with COL3A1. Part of a GPCR-tetraspanin complex at least consisting of ADGRG1, CD81, eventually CD9, and GNA11 in which CD81 is enhancing the association of ADGRG1 with GNA11. Autoproteolytically cleaved into 2 fragments; the large extracellular N-terminal fragment (ADGRG1 NT) and the membrane-bound C-terminal fragment (ADGRG1 CT) predominantly remain associated and non-covalently linked. Shedding to yield the secreted ADGRG1 N-terminal fragment seems to involve metalloprotease(s). In terms of processing, N-glycosylated. Contains sialic acid residues. Post-translationally, ubiquitinated. Undergoes polyubiquitination upon activation. As to expression, widely distributed with highest levels found in thyroid gland, brain and heart. Expressed in a great number of tumor cells. Expression is down-regulated in different tumors from highly metastatic cells.

It localises to the cell membrane. Its subcellular location is the secreted. The protein resides in the membrane raft. With respect to regulation, forms a heterodimer of 2 chains generated by proteolytic processing that remain associated through non-covalent interactions mediated by the GAIN-B domain. In the inactivated receptor, the Stachel sequence (also named stalk) is embedded in the GAIN-B domain, where it adopts a beta-strand conformation. On activation, the Stachel moves into the 7 transmembrane region and adopts a twisted hook-shaped configuration that forms contacts within the receptor, leading to coupling of a G-alpha protein, which activates signaling. The cleaved GAIN-B and N-terminal domains can then dissociate from the rest of the receptor. Functionally, adhesion G-protein coupled receptor (aGPCR) for steroid hormone 17alpha-hydroxypregnenolone (17-OH), which is involved in cell adhesion and cell-cell interactions. Ligand binding causes a conformation change that triggers signaling via guanine nucleotide-binding proteins (G proteins) and modulates the activity of downstream effectors, such as RhoA pathway. ADGRG1 is coupled to G(12) and/or G(13) G proteins (GNA12 and GNA13, respectively) and mediates the activation Rho small GTPases. Acts as a potent suppressor of ferroptosis: binding to 17-OH-binding initiates signaling that down-regulates CD36 and alleviates ferroptosis-induced liver injury. Ligand-binding also induces cell adhesion activity via association with proteins such as collagen III/COL3A1 and TGM2. Mediates cell matrix adhesion in developing neurons and hematopoietic stem cells. Involved in cortical development, specifically in maintenance of the pial basement membrane integrity and in cortical lamination: association with COL3A1 in the developing brain inhibits neuronal migration via activation of the RhoA pathway. Together with TGM2, acts as a regulator of myelination and myelin repair in oligodendrocyte precursor cells. Acts as a hemostatic sensor of shear force: G protein-coupled receptor signaling is activated in response to shear force in platelets, promoting G(13) G protein signaling, and platelet shape change and aggregation in a COL3A1-dependent manner. Acts as an inhibitor of VEGFA production thereby inhibiting angiogenesis through a signaling pathway mediated by PRKCA. Plays a role in the maintenance of hematopoietic stem cells in bone marrow niche. Plays an essential role in testis development. This Homo sapiens (Human) protein is Adhesion G-protein coupled receptor G1.